The sequence spans 356 residues: Holliday junction branch migration complex subunit RuvB (356 aa).

The segment at 4–191 (TDKLATEQRI…FGIVARLEFY (188 aa)) is large ATPase domain (RuvB-L). ATP contacts are provided by residues L30, R31, G72, K75, T76, T77, 138–140 (EDY), R181, Y191, and R228. T76 provides a ligand contact to Mg(2+). The tract at residues 192–262 (DADQLSRIVR…VADAALAMLD (71 aa)) is small ATPAse domain (RuvB-S). Residues 265–356 (PVGFDLMDRK…RDEWDTPDGK (92 aa)) form a head domain (RuvB-H) region. DNA is bound by residues R301, R320, and R325.

The protein belongs to the RuvB family. In terms of assembly, homohexamer. Forms an RuvA(8)-RuvB(12)-Holliday junction (HJ) complex. HJ DNA is sandwiched between 2 RuvA tetramers; dsDNA enters through RuvA and exits via RuvB. An RuvB hexamer assembles on each DNA strand where it exits the tetramer. Each RuvB hexamer is contacted by two RuvA subunits (via domain III) on 2 adjacent RuvB subunits; this complex drives branch migration. In the full resolvosome a probable DNA-RuvA(4)-RuvB(12)-RuvC(2) complex forms which resolves the HJ.

The protein localises to the cytoplasm. It carries out the reaction ATP + H2O = ADP + phosphate + H(+). The RuvA-RuvB-RuvC complex processes Holliday junction (HJ) DNA during genetic recombination and DNA repair, while the RuvA-RuvB complex plays an important role in the rescue of blocked DNA replication forks via replication fork reversal (RFR). RuvA specifically binds to HJ cruciform DNA, conferring on it an open structure. The RuvB hexamer acts as an ATP-dependent pump, pulling dsDNA into and through the RuvAB complex. RuvB forms 2 homohexamers on either side of HJ DNA bound by 1 or 2 RuvA tetramers; 4 subunits per hexamer contact DNA at a time. Coordinated motions by a converter formed by DNA-disengaged RuvB subunits stimulates ATP hydrolysis and nucleotide exchange. Immobilization of the converter enables RuvB to convert the ATP-contained energy into a lever motion, pulling 2 nucleotides of DNA out of the RuvA tetramer per ATP hydrolyzed, thus driving DNA branch migration. The RuvB motors rotate together with the DNA substrate, which together with the progressing nucleotide cycle form the mechanistic basis for DNA recombination by continuous HJ branch migration. Branch migration allows RuvC to scan DNA until it finds its consensus sequence, where it cleaves and resolves cruciform DNA. The chain is Holliday junction branch migration complex subunit RuvB from Burkholderia cenocepacia (strain ATCC BAA-245 / DSM 16553 / LMG 16656 / NCTC 13227 / J2315 / CF5610) (Burkholderia cepacia (strain J2315)).